A 128-amino-acid chain; its full sequence is SH2 domain-containing protein 1A (128 aa).

One can recognise an SH2 domain in the interval 6 to 102 (VYHGKISRET…GIVIPLQYPV (97 aa)). The segment at 67-92 (ETAPGVHKRFFRKIKNLISAFQKPDQ) is interaction with FYN SH3 domain. Residue Lys-89 is modified to N6-acetyllysine. The disordered stretch occupies residues 104–128 (KKPSARSTQGATGRRDDPDVFLKTP). Over residues 116 to 128 (GRRDDPDVFLKTP) the composition is skewed to basic and acidic residues.

In terms of assembly, interacts with CD84, CD244, LY9, SLAMF1 and FYN. Interacts with NTRK1, NTRK2 and NTRK3.

It localises to the cytoplasm. Its function is as follows. Cytoplasmic adapter regulating receptors of the signaling lymphocytic activation molecule (SLAM) family such as SLAMF1, CD244, LY9, CD84, SLAMF6 and SLAMF7. In SLAM signaling seems to cooperate with SH2D1B/EAT-2. Initially it has been proposed that association with SLAMF1 prevents SLAMF1 binding to inhibitory effectors including INPP5D/SHIP1 and PTPN11/SHP-2. However, by simultaneous interactions, recruits FYN which subsequently phosphorylates and activates SLAMF1. Positively regulates CD244/2B4- and CD84-mediated natural killer (NK) cell functions. Can also promote CD48-, SLAMF6 -, LY9-, and SLAMF7-mediated NK cell activation. In the context of NK cell-mediated cytotoxicity enhances conjugate formation with target cells. May also regulate the activity of the neurotrophin receptors NTRK1, NTRK2 and NTRK3. The polypeptide is SH2 domain-containing protein 1A (SH2D1A) (Bos taurus (Bovine)).